We begin with the raw amino-acid sequence, 263 residues long: MARGPKKHLKRVAAPKHWMLDKLTGVFAPRPSTGPHKLRECLPLIIFLRNRLKYALTGDEVKKICMQRFIKIDGKVRVDVTYPAGFMDVISIEKTGEHFRLVYDTKGRFAVHRITAEEAKYKLCKVRKITVGTKGIPHLVTHDARTIRYPDPVIKVNDTVRIDLGSGKITSFIKFDTGNVCMVIGGANLGRVGVITNRERHPGSFDVVHVKDASGNSFATRISNIFVIGNGNKPWISLPRGKGIRLTIAEERDKRLAAKQSSG.

Residues 42-104 enclose the S4 RNA-binding domain; it reads LPLIIFLRNR…TGEHFRLVYD (63 aa).

It belongs to the eukaryotic ribosomal protein eS4 family.

This Macaca fuscata fuscata (Japanese macaque) protein is Small ribosomal subunit protein eS4, Y isoform 1 (RPS4Y1).